A 260-amino-acid chain; its full sequence is NAD-dependent protein deacetylase (260 aa).

Residues 9 to 260 enclose the Deacetylase sirtuin-type domain; sequence DDIDGETLDA…QVLPAIVERL (252 aa). Residues Ala35, Thr39, Phe46, Arg47, Gln114, Ile116, Asp117, and His132 each coordinate NAD(+). Phe46 provides a ligand contact to nicotinamide. Nicotinamide-binding residues include Ile116 and Asp117. His132 functions as the Proton acceptor in the catalytic mechanism. Zn(2+)-binding residues include Cys140, Cys143, Cys166, and Cys168. The NAD(+) site is built by Ser206, Ser207, Asn231, Asp248, and Val249.

This sequence belongs to the sirtuin family. Class U subfamily. Requires Zn(2+) as cofactor.

It is found in the cytoplasm. The enzyme catalyses N(6)-acetyl-L-lysyl-[protein] + NAD(+) + H2O = 2''-O-acetyl-ADP-D-ribose + nicotinamide + L-lysyl-[protein]. Functionally, NAD-dependent protein deacetylase which modulates the activities of several enzymes which are inactive in their acetylated form. Deacetylates the N-terminal lysine residue of Alba, the major archaeal chromatin protein and that, in turn, increases Alba's DNA binding affinity, thereby repressing transcription. The sequence is that of NAD-dependent protein deacetylase from Haloarcula marismortui (strain ATCC 43049 / DSM 3752 / JCM 8966 / VKM B-1809) (Halobacterium marismortui).